Here is a 929-residue protein sequence, read N- to C-terminus: Leucine--tRNA ligase (929 aa).

The 'HIGH' region signature appears at 42 to 52 (PYPSGNLHMGH). The 'KMSKS' region signature appears at 614-618 (KMSKS). Lysine 617 serves as a coordination point for ATP.

It belongs to the class-I aminoacyl-tRNA synthetase family.

The protein localises to the cytoplasm. The catalysed reaction is tRNA(Leu) + L-leucine + ATP = L-leucyl-tRNA(Leu) + AMP + diphosphate. In Trichodesmium erythraeum (strain IMS101), this protein is Leucine--tRNA ligase.